Here is a 446-residue protein sequence, read N- to C-terminus: Amino-acid acetyltransferase (446 aa).

An N-acetyltransferase domain is found at 299 to 438; sequence EQVRDAEIDD…QKLYNFQRKS (140 aa).

This sequence belongs to the acetyltransferase family. ArgA subfamily.

It localises to the cytoplasm. It catalyses the reaction L-glutamate + acetyl-CoA = N-acetyl-L-glutamate + CoA + H(+). Its pathway is amino-acid biosynthesis; L-arginine biosynthesis; N(2)-acetyl-L-ornithine from L-glutamate: step 1/4. The protein is Amino-acid acetyltransferase of Aliivibrio fischeri (strain ATCC 700601 / ES114) (Vibrio fischeri).